An 845-amino-acid polypeptide reads, in one-letter code: RNA-directed RNA polymerase (845 aa).

Gly248–Thr255 contributes to the GTP binding site. Residues Met384 to Ala588 form the RdRp catalytic domain. Disordered stretches follow at residues Pro686–Leu706 and Ala799–Gln845. The segment covering Lys833–Gln845 has biased composition (basic residues).

As to quaternary structure, interacts with VP3 in the cytoplasm. In terms of processing, exists in multiple phosphorylated forms.

Its subcellular location is the virion. It catalyses the reaction RNA(n) + a ribonucleoside 5'-triphosphate = RNA(n+1) + diphosphate. In terms of biological role, RNA-dependent RNA polymerase which is found both free and covalently attached to the genomic RNA. May also contain guanylyl and methyl transferase activities. The polypeptide is RNA-directed RNA polymerase (VP1) (Oncorhynchus mykiss (Rainbow trout)).